The chain runs to 562 residues: Protein wntless (562 aa).

The Cytoplasmic portion of the chain corresponds to 1 to 13 (MSGTILENLSGRK). The helical transmembrane segment at 14-34 (LSILVGSLLLCQVLCFLLGGL) threads the bilayer. Residues 35–239 (YAPVPAGHTN…AIHQNGGFTH (205 aa)) lie on the Lumenal side of the membrane. Asn-58 carries an N-linked (GlcNAc...) asparagine glycan. The helical transmembrane segment at 240–260 (VWLMLKTLLFPFVVGIMVWFW) threads the bilayer. At 261–270 (RRVHLLQRSP) the chain is on the cytoplasmic side. A helical transmembrane segment spans residues 271 to 291 (ALLEYMLLYLGGALTFLNLPL). Residues 292–311 (EYLSLTIEMPYMLLLSDIRQ) lie on the Lumenal side of the membrane. A helical membrane pass occupies residues 312–332 (GIFYAMLLSFWLVFAGEHMLI). The Cytoplasmic portion of the chain corresponds to 333–344 (QDSSNKSTIRSR). The chain crosses the membrane as a helical span at residues 345 to 365 (YWKHLSAVVVGCISLFVFDIS). The Lumenal segment spans residues 366 to 386 (ERGVQLRNPFYSIWTTPLGAK). A helical transmembrane segment spans residues 387-407 (VAMSFILLAGVSAAVYFLFLC). The Cytoplasmic segment spans residues 408–441 (YMISKVFKNIGDKRTSLPSMSQARRLHYEGLIYR). The helical transmembrane segment at 442–462 (FKFLMLATLLCAALTVTGFIM) threads the bilayer. Residues 463 to 482 (GQMAEGQWKWNDDVEIQLTS) lie on the Lumenal side of the membrane. Residues 483–503 (AFLTGVYGMWNIYIFALLILY) form a helical membrane-spanning segment. At 504 to 562 (APSHKQWPTMHHSDETTQSNENIVASAASEEIEFSNLPSDSNPSEISSLTSFTRKVAFE) the chain is on the cytoplasmic side. Residues 538–562 (SNLPSDSNPSEISSLTSFTRKVAFE) are disordered. Residues 539 to 556 (NLPSDSNPSEISSLTSFT) show a composition bias toward polar residues.

This sequence belongs to the wntless family. Interacts with wg; in the Golgi. Interacts with Vps35, a component of the retromer complex; wls stability is regulated by Vps35.

Its subcellular location is the presynaptic cell membrane. The protein resides in the postsynaptic cell membrane. It localises to the cell membrane. It is found in the endoplasmic reticulum membrane. The protein localises to the endosome membrane. Its subcellular location is the golgi apparatus membrane. Functionally, a segment polarity gene required for wingless (wg)-dependent patterning processes, acting in both wg-sending cells and wg-target cells. In non-neuronal cells wls directs wg secretion. The wls traffic loop encompasses the Golgi, the cell surface, an endocytic compartment and a retrograde route leading back to the Golgi, and involves clathrin-mediated endocytosis and the retromer complex (a conserved protein complex consisting of Vps35 and Vps26). In neuronal cells (the larval motorneuron NMJ), the wg signal moves across the synapse via the release of wls-containing exosome-like vesicles. Postsynaptic wls is required for the trafficking of fz2 through the fz2-interacting protein Grip. The sequence is that of Protein wntless from Drosophila pseudoobscura pseudoobscura (Fruit fly).